The following is a 437-amino-acid chain: ATP-dependent protease ATPase subunit HslU (437 aa).

ATP is bound by residues valine 18, 60-65 (GVGKTE), aspartate 250, glutamate 315, and arginine 387.

The protein belongs to the ClpX chaperone family. HslU subfamily. A double ring-shaped homohexamer of HslV is capped on each side by a ring-shaped HslU homohexamer. The assembly of the HslU/HslV complex is dependent on binding of ATP.

Its subcellular location is the cytoplasm. Functionally, ATPase subunit of a proteasome-like degradation complex; this subunit has chaperone activity. The binding of ATP and its subsequent hydrolysis by HslU are essential for unfolding of protein substrates subsequently hydrolyzed by HslV. HslU recognizes the N-terminal part of its protein substrates and unfolds these before they are guided to HslV for hydrolysis. The protein is ATP-dependent protease ATPase subunit HslU of Desulfovibrio desulfuricans (strain ATCC 27774 / DSM 6949 / MB).